Reading from the N-terminus, the 307-residue chain is METKDGFLVINKDKGCTSHDCVKQIRKLLNTKKVGHTGTLDPEVIGTLPIAIGNATRFIQYLPQGKTYIGEIKLGIRTSTDDIQGEIISQKSWPKISYKQLDQYFNRFRGIIKQIPPKVSSVHVNGERAYKKSFRNEIFELAPREVKIDELILMNWDQINGIIEIKIKCSAGTYIRSIARDIGETLNSAGCLLQLKRISACGFDEQNSIKISDIEKEKGKKNSKNFIIPTISALSHISTFVLSNEEQINFWQTGREIKVDINYFRESKSFDYKKPIKVIDNKQTLLGIGFLNKEQSNINPKLVLNAK.

Asp-41 acts as the Nucleophile in catalysis.

This sequence belongs to the pseudouridine synthase TruB family. Type 1 subfamily.

The catalysed reaction is uridine(55) in tRNA = pseudouridine(55) in tRNA. Its function is as follows. Responsible for synthesis of pseudouridine from uracil-55 in the psi GC loop of transfer RNAs. The chain is tRNA pseudouridine synthase B from Prochlorococcus marinus (strain AS9601).